A 1409-amino-acid chain; its full sequence is DNA-directed RNA polymerase subunit beta' (1409 aa).

Residues Cys-69, Cys-71, Cys-84, and Cys-87 each contribute to the Zn(2+) site. 3 residues coordinate Mg(2+): Asp-461, Asp-463, and Asp-465. Positions 805, 879, 886, and 889 each coordinate Zn(2+).

The protein belongs to the RNA polymerase beta' chain family. In terms of assembly, the RNAP catalytic core consists of 2 alpha, 1 beta, 1 beta' and 1 omega subunit. When a sigma factor is associated with the core the holoenzyme is formed, which can initiate transcription. The cofactor is Mg(2+). It depends on Zn(2+) as a cofactor.

The enzyme catalyses RNA(n) + a ribonucleoside 5'-triphosphate = RNA(n+1) + diphosphate. DNA-dependent RNA polymerase catalyzes the transcription of DNA into RNA using the four ribonucleoside triphosphates as substrates. The sequence is that of DNA-directed RNA polymerase subunit beta' from Anaplasma phagocytophilum (strain HZ).